The primary structure comprises 586 residues: Retron Ec67 protein (586 aa).

One can recognise a Reverse transcriptase domain in the interval 29-262 (FLTNVLYRIG…SRQEVTGLTV (234 aa)). Mg(2+) contacts are provided by D120, D201, and D202.

It belongs to the bacterial reverse transcriptase family.

The enzyme catalyses DNA(n) + a 2'-deoxyribonucleoside 5'-triphosphate = DNA(n+1) + diphosphate. It catalyses the reaction Endonucleolytic cleavage to 5'-phosphomonoester.. Reverse transcriptase (RT) component of antiviral defense system retron Ec67, minimally composed of a non-coding RNA (ncRNA) and this RT. Expression of these 2 elements confers protection against bacteriophage T5. At multiplicity of infection (MOI) of 0.02 cultures grow normally when infected with T5 without collapsing, at MOI 2 cultures enter growth stasis. Responsible for synthesis of msDNA-Ec67 (a branched molecule with RNA linked by a 2',5'-phosphodiester bond to ssDNA). The retron transcript serves as primer (from a conserved internal G residue) and template for the reaction, and codes for the RT. Can use other retrons as substrate (msDNA-Mx162 and msDNA-Ec86). Also able to synthesize DNA from a DNA template at least in vitro, although the enzyme is less active with a DNA template. This Escherichia coli protein is Retron Ec67 protein.